A 510-amino-acid chain; its full sequence is 2,3-bisphosphoglycerate-independent phosphoglycerate mutase (510 aa).

D12 is a Mn(2+) binding site. At Y36 the chain carries Phosphotyrosine. Residue S62 coordinates Mn(2+). Residue S62 is the Phosphoserine intermediate of the active site. Substrate is bound by residues H123, 153 to 154 (RD), R185, R191, 261 to 264 (RPDR), and K336. Residues D403, H407, D444, H445, and H462 each contribute to the Mn(2+) site.

It belongs to the BPG-independent phosphoglycerate mutase family. As to quaternary structure, monomer. Mn(2+) is required as a cofactor.

The enzyme catalyses (2R)-2-phosphoglycerate = (2R)-3-phosphoglycerate. The protein operates within carbohydrate degradation; glycolysis; pyruvate from D-glyceraldehyde 3-phosphate: step 3/5. Essential for rapid growth and for sporulation. Catalyzes the interconversion of 2-phosphoglycerate and 3-phosphoglycerate. The protein is 2,3-bisphosphoglycerate-independent phosphoglycerate mutase of Halalkalibacterium halodurans (strain ATCC BAA-125 / DSM 18197 / FERM 7344 / JCM 9153 / C-125) (Bacillus halodurans).